The primary structure comprises 166 residues: Ureidoglycolate lyase (166 aa).

The protein belongs to the ureidoglycolate lyase family. In terms of assembly, homodimer. Requires Ni(2+) as cofactor.

It catalyses the reaction (S)-ureidoglycolate = urea + glyoxylate. It functions in the pathway nitrogen metabolism; (S)-allantoin degradation. Catalyzes the catabolism of the allantoin degradation intermediate (S)-ureidoglycolate, generating urea and glyoxylate. Involved in the utilization of allantoin as nitrogen source. The chain is Ureidoglycolate lyase from Agrobacterium fabrum (strain C58 / ATCC 33970) (Agrobacterium tumefaciens (strain C58)).